Here is a 768-residue protein sequence, read N- to C-terminus: Calcium up-regulated protein G (768 aa).

The interval 1-22 (MINIEDISKSSNQSEEKQLKST) is disordered. Ricin B-type lectin domains lie at 1–107 (MINI…WTID) and 100–248 (KTQI…WGIN).

Belongs to the cup family.

It is found in the cytoplasm. The protein localises to the membrane. In terms of biological role, may play an important role in stabilizing and/or regulating the cell membrane during Ca(2+) stress or certain stages of development. The polypeptide is Calcium up-regulated protein G (cupG) (Dictyostelium discoideum (Social amoeba)).